We begin with the raw amino-acid sequence, 576 residues long: Arginine--tRNA ligase (576 aa).

The short motif at 122 to 132 is the 'HIGH' region element; the sequence is PNVAKEMHVGH.

This sequence belongs to the class-I aminoacyl-tRNA synthetase family. As to quaternary structure, monomer.

The protein resides in the cytoplasm. The enzyme catalyses tRNA(Arg) + L-arginine + ATP = L-arginyl-tRNA(Arg) + AMP + diphosphate. This is Arginine--tRNA ligase from Sodalis glossinidius (strain morsitans).